The chain runs to 597 residues: Probable serine/threonine-protein kinase DDB_G0281745 (597 aa).

Polar residues predominate over residues Thr49–Pro61. The interval Thr49–Ala320 is disordered. Residues Gln72–Thr97 show a composition bias toward pro residues. Polar residues predominate over residues Thr114 to Gly140. Over residues Ser157 to Asn168 the composition is skewed to low complexity. Residues Pro208 to Gln234 are compositionally biased toward pro residues. Low complexity predominate over residues Pro235–Gln264. The segment covering Gln265–Gln274 has biased composition (pro residues). The span at Pro275 to Gly301 shows a compositional bias: low complexity. The Protein kinase domain occupies Lys334–Tyr585. ATP-binding positions include Ile340–Val348 and Lys361. Asp454 acts as the Proton acceptor in catalysis.

Belongs to the protein kinase superfamily. TKL Ser/Thr protein kinase family.

It catalyses the reaction L-seryl-[protein] + ATP = O-phospho-L-seryl-[protein] + ADP + H(+). The catalysed reaction is L-threonyl-[protein] + ATP = O-phospho-L-threonyl-[protein] + ADP + H(+). This Dictyostelium discoideum (Social amoeba) protein is Probable serine/threonine-protein kinase DDB_G0281745.